The sequence spans 114 residues: uncharacterized protein (114 aa).

Residues Cys-40, Cys-106, and Cys-108 each contribute to the Fe cation site.

This sequence belongs to the HesB/IscA family. Ycf83 subfamily.

The protein localises to the plastid. The protein resides in the chloroplast. This is an uncharacterized protein from Pyropia yezoensis (Susabi-nori).